The following is a 28-amino-acid chain: Dermaseptin-H2 (28 aa).

This sequence belongs to the frog skin active peptide (FSAP) family. Dermaseptin subfamily. Expressed by the skin glands.

The protein localises to the secreted. In terms of biological role, possesses a potent antimicrobial activity against Gram-positive and Gram-negative bacteria. Probably acts by disturbing membrane functions with its amphipathic structure. This chain is Dermaseptin-H2, found in Pithecopus azureus (Orange-legged monkey tree frog).